We begin with the raw amino-acid sequence, 432 residues long: GTPase Obg (432 aa).

An Obg domain is found at 1–158 (MFVDQIKIEV…RKLKLELKVL (158 aa)). Positions 159–335 (ADVGLVGFPS…LTHRTADVLE (177 aa)) constitute an OBG-type G domain. GTP contacts are provided by residues 165–172 (GFPSVGKS), 190–194 (FTTLV), 212–215 (DLPG), 282–285 (SKMD), and 316–318 (SSL). Mg(2+) is bound by residues S172 and T192. One can recognise an OCT domain in the interval 354–432 (TFKEDEPAFK…IEDFTFEFVE (79 aa)).

It belongs to the TRAFAC class OBG-HflX-like GTPase superfamily. OBG GTPase family. In terms of assembly, monomer. Requires Mg(2+) as cofactor.

It is found in the cytoplasm. Functionally, an essential GTPase which binds GTP, GDP and possibly (p)ppGpp with moderate affinity, with high nucleotide exchange rates and a fairly low GTP hydrolysis rate. Plays a role in control of the cell cycle, stress response, ribosome biogenesis and in those bacteria that undergo differentiation, in morphogenesis control. The protein is GTPase Obg of Ligilactobacillus salivarius (strain UCC118) (Lactobacillus salivarius).